Consider the following 1296-residue polypeptide: Aggregation substance (1296 aa).

The N-terminal stretch at 1-43 is a signal peptide; the sequence is MKQQTEVKKRFKMYKAKKHWVVAPILFIGVLGVVGLATDDVQA. Disordered stretches follow at residues 48 to 188 and 1221 to 1245; these read TQPG…KPAE and HTPEKPQTPPEKTVIVPPTPKTPQA. Positions 89–99 are enriched in basic and acidic residues; it reads KVEEVASEKNG. Composition is skewed to polar residues over residues 100–117 and 125–138; these read AEQSSATPNDTTNAQQPT and QEQPVVSPETTNEP. A compositionally biased stretch (basic and acidic residues) spans 160–178; it reads KEFETPDVDKAVDEAKKDP. An LPXTG sorting signal motif is present at residues 1261 to 1265; the sequence is LPQTG. A Pentaglycyl murein peptidoglycan amidated threonine modification is found at Thr-1264. A propeptide spans 1265-1296 (removed by sortase); sequence GEKQNVLLTVAGSLAAMLGLAGLGFKRRKETK.

Belongs to the antigen I/II family.

It is found in the secreted. The protein localises to the cell wall. In terms of biological role, aggregation substance allows donor and recipient strains to form tight aggregates which allow the non-motile bacteria to maintain physical contact over a period of time sufficient to permit conjugative transfer of the sex pheromone plasmid from donor to recipient strains. The protein is Aggregation substance (asa1) of Enterococcus faecalis (strain ATCC 700802 / V583).